A 922-amino-acid polypeptide reads, in one-letter code: MATASPRSDTSNNHSGRLQLQVTVSSAKLKRKKNWFGTAIYTEVVVDGEITKTAKSSSSSNPKWDEQLTVNVTPQTTLEFQVWSHRTLKADALLGKATIDLKQALLIHNRKLERVKEQLKLSLENKNGIAQTGELTVVLDGLVIEQENITNCSSSPTIEIQENGDALHENGEPSARTTARLAVEGTNGIDNHVPTSTLVQNSCCSYVVNGDNTPSSPSQVAARPKNTPAPKPLASEPADDTVNGESSSFAPTDNASVTGTPVVSEENALSPNCTSTTVEDPPVQEILTSSENNECIPSTSAELESEARSILEPDTSNSRSSSAFEAAKSRQPDGCMDPVRQQSGNANTETLPSGWEQRKDPHGRTYYVDHNTRTTTWERPQPLPPGWERRVDDRRRVYYVDHNTRTTTWQRPTMESVRNFEQWQSQRNQLQGAMQQFNQRYLYSASMLAAENDPYGPLPPGWEKRVDSTDRVYFVNHNTKTTQWEDPRTQGLQNEEPLPEGWEIRYTREGVRYFVDHNTRTTTFKDPRNGKSSVTKGGPQIAYERGFRWKLAHFRYLCQSNALPSHVKINVSRQTLFEDSFQQIMALKPYDLRRRLYVIFRGEEGLDYGGLAREWFFLLSHEVLNPMYCLFEYAGKNNYCLQINPASTINPDHLSYFCFIGRFIAMALFHGKFIDTGFSLPFYKRMLSKKLTIKDLESIDTEFYNSLIWIRDNNIEECGLEMYFSVDMEILGKVTSHDLKLGGSNILVTEENKDEYIGLMTEWRFSRGVQEQTKAFLDGFNEVVPLQWLQYFDEKELEVMLCGMQEVDLADWQRNTVYRHYTRNSKQIIWFWQFVKETDNEVRMRLLQFVTGTCRLPLGGFAELMGSNGPQKFCIEKVGKDTWLPRSHTCFNRLDLPPYKSYEQLKEKLLFAIEETEGFGQE.

In terms of domain architecture, C2 spans 1–116 (MATASPRSDT…IHNRKLERVK (116 aa)). Composition is skewed to polar residues over residues 210–219 (GDNTPSSPSQ), 243–278 (NGESSSFAPTDNASVTGTPVVSEENALSPNCTSTTV), 286–302 (ILTSSENNECIPSTSAE), 314–323 (DTSNSRSSSA), and 340–351 (RQQSGNANTETL). Residues 210-388 (GDNTPSSPSQ…RPQPLPPGWE (179 aa)) are disordered. 4 consecutive WW domains span residues 349-382 (ETLPSGWEQRKDPHGRTYYVDHNTRTTTWERPQP), 381-414 (QPLPPGWERRVDDRRRVYYVDHNTRTTTWQRPTM), 456-489 (GPLPPGWEKRVDSTDRVYFVNHNTKTTQWEDPRT), and 496-529 (EPLPEGWEIRYTREGVRYFVDHNTRTTTFKDPRN). Positions 349–531 (ETLPSGWEQR…TTFKDPRNGK (183 aa)) are required for interaction with and ubiquitination of AMOTL2. Required for interaction with YAP1. The HECT domain maps to 588–922 (KPYDLRRRLY…IEETEGFGQE (335 aa)). Cys890 serves as the catalytic Glycyl thioester intermediate.

As to quaternary structure, interacts with the Crumbs complex components PALS1 and PATJ; interaction with the Crumbs complex is enhanced by WWP1's interaction with AMOTL2 and facilitates WWP1 localization to the plasma membrane. Interaction with the Crumbs complex promotes WWP1 monoubiquitination of AMOTL2, which activates the Hippo signaling pathway. Binds KLF2 and HIVEP3. Binds SCNN1A, SCNN1B, SCNN1G, WBP1, WBP2, DRPLA and adenovirus type 2 PIII. Interacts with RNF11. Interacts with SPART. Interacts with ERBB4 isoforms JM-B CYT-1 and JM-A CYT-1. Interacts with SMAD1, SMAD2, SMAD3, SMAD5, SMAD6, SMAD7, TGFBR1 and TGFBR2. Associates with the TGFBR1:TGFBR2 receptor complex in presence of SMAD7. Interacts with SKIL isoform 1. Interacts with TP63 isoform 1 and isoform 2. Interacts with STAMBP and RNF11. Interacts with NDFIP1 and NDFIP2; this interaction activates the E3 ubiquitin-protein ligase. Interacts with TGIF. Interacts (via WW domains) with ARRDC1, ARRDC2 and ARRDC3. (Microbial infection) Interacts with HTLV-1 protein Gag. In terms of assembly, (Microbial infection) Interacts with ebola virus protein VP40. In terms of processing, auto-ubiquitinated and ubiquitinated by RNF11. As to expression, detected in heart, placenta, pancreas, kidney, liver, skeletal muscle, bone marrow, fetal brain, and at much lower levels in adult brain and lung. Isoform 1 and isoform 5 predominate in all tissues tested, except in testis and bone marrow, where isoform 5 is expressed at much higher levels than isoform 1.

It localises to the cytoplasm. It is found in the cell membrane. The protein resides in the nucleus. The protein localises to the cell junction. It catalyses the reaction S-ubiquitinyl-[E2 ubiquitin-conjugating enzyme]-L-cysteine + [acceptor protein]-L-lysine = [E2 ubiquitin-conjugating enzyme]-L-cysteine + N(6)-ubiquitinyl-[acceptor protein]-L-lysine.. It participates in protein modification; protein ubiquitination. Its activity is regulated as follows. Activated by NDFIP1- and NDFIP2-binding. Its function is as follows. E3 ubiquitin-protein ligase which accepts ubiquitin from an E2 ubiquitin-conjugating enzyme in the form of a thioester and then directly transfers the ubiquitin to targeted substrates. Ubiquitinates ERBB4 isoforms JM-A CYT-1 and JM-B CYT-1, KLF2, KLF5 and TP63 and promotes their proteasomal degradation. Ubiquitinates RNF11 without targeting it for degradation. Ubiquitinates and promotes degradation of TGFBR1; the ubiquitination is enhanced by SMAD7. Ubiquitinates SMAD6 and SMAD7. Ubiquitinates and promotes degradation of SMAD2 in response to TGF-beta signaling, which requires interaction with TGIF. Activates the Hippo signaling pathway in response to cell contact inhibition and recruitment to the Crumbs complex at the cell membrane. Monoubiquitinates AMOTL2 which facilitates its interaction with and activation of LATS2. LATS2 then phosphorylates YAP1, excluding it from the nucleus and therefore ultimately represses YAP1-driven transcription of target genes. The polypeptide is NEDD4-like E3 ubiquitin-protein ligase WWP1 (WWP1) (Homo sapiens (Human)).